Consider the following 464-residue polypeptide: Secretion-regulating guanine nucleotide exchange factor (464 aa).

RCC1 repeat units lie at residues 14–66 (AAAL…VVTD), 68–118 (GSLF…ILTE), 119–170 (NGQV…AATA), 172–229 (GTVF…SLTD), 230–282 (AGEL…AQTV), 283–349 (TGKV…LAVI), and 350–401 (GGVC…ALCQ). Residues 301-313 (VETREGWESEKQD) show a composition bias toward basic and acidic residues. The disordered stretch occupies residues 301-323 (VETREGWESEKQDPSLPGSGPQK). The disordered stretch occupies residues 411 to 464 (HPSVTSPSPDATKEARSQEAMEQERNQKERHAETSPQAQSDRFRNGGLVAETLE). Over residues 421 to 443 (ATKEARSQEAMEQERNQKERHAE) the composition is skewed to basic and acidic residues. Ser-427 is modified (phosphoserine).

In terms of assembly, interacts with SEC5. The interaction occurs only in the presence of magnesium or manganese and is stimulated by dCTP or GTP.

Its subcellular location is the cytoplasm. The protein localises to the nucleus. Functionally, probable guanine nucleotide exchange factor (GEF), which may be involved in the secretion process. This chain is Secretion-regulating guanine nucleotide exchange factor (SERGEF), found in Bos taurus (Bovine).